The following is a 181-amino-acid chain: uncharacterized protein (181 aa).

This is an uncharacterized protein from Acheta domesticus (House cricket).